A 1112-amino-acid chain; its full sequence is MDFPLPALLAIEDYDENEGKLAASIRWLISRVYEEKRDMPDKLRDGVQRDENGHFQIDEAVVGALCNGSLYAQAAAKIFKESALVTKGHGAVLAVLTDYGIDVLHDGNELVEEAQLVASAPFNMSAHLAIIDALMMAHLRDVIPVSRVVEAVSRHTAVEPSEKPIDSVDALLFWINKICLLVRDDVEREDSNTNIPEMEDLYEDISDGQCLCALLHWYRPHEMPVADISFNDSATTRDCQYNLMLLQLFCRHHLAVDPFHFEIEDLLYLRDSLQMNVNAFLADLFVQFEPPVTPEPVETPRIGPSPRRFVPASAIPDLRAANAAARSSMHNRNRPRMYNPPPAVSHSQGPSRSVSRMSQDSLFYSRPASIALQRRSMDQDSVTDFQTIRQGFENQAGTAQLNRYDGSVTASVRLAMEEKRRKHDQQMAQMSFSSANETERLEKSKAAFFALRKNDNDQTSKGKEEWYDHFEAKLRALELRVGLEEGEDGTQSARLNRASSQPSVVQAGQTYPANYMTLPMNAAAQMTQSYIQHPQTPHDYYMQQQMQQQQQQQAQAQSNYASPSQLRNSLSNGMINHAGYIVQSMYPGDYQQQQQQMQMQQGQMPVQPVGAYTPEGYFIPHHMQPIPVQQGYQQMPQPGMGFNGMPATSQPGFNMEGSPAQMGYIQTANKPLDMEMPMQQQPPQQPPQQMLPPNQNAFHLHSKSDDATQVQADPPLEINRNLTNWGMTYKQEMPARSIPSRRTWQNETFIKNELDLVNSKESVPHITDETTTQPEEAARRFPDLMLDNHSENLAPGRGFSRQNDRDDLSTGRKSDDSPTDTPGRTFDDDEGSGENMEKIANERRIAKKAALIAKTMKRKEEIETKVDLAEQRNAERRQVENEKKELALRKKVEKEQQRQKILDEYKRKKLEKELGAELSARSTGRGHSQPPFIRTKSQMSEVTESSRQNTPRMRGQSSVEQRVSVSSLAEPTHKLYAKTVTKSNRGLINNALQFSVFPGAVNNATRQATITQMASSSSKHFLILFRDQKCQYRGLYTWDEISDTAVKISGQGPPKCTEAMMNSMFKYDSGAKNFTNIATKHLSATIDGFAILDQYWQKARIPHSGTPAHKNN.

The Calponin-homology (CH) domain maps to 165–286; sequence IDSVDALLFW…VNAFLADLFV (122 aa). Disordered regions lie at residues 324 to 358, 485 to 504, 542 to 566, and 788 to 834; these read AARS…SRMS, EGED…QPSV, MQQQ…PSQL, and NHSE…GSGE. Polar residues-rich tracts occupy residues 345–358 and 489–504; these read SHSQ…SRMS and GTQS…QPSV. Over residues 542–557 the composition is skewed to low complexity; sequence MQQQMQQQQQQQAQAQ. Basic and acidic residues predominate over residues 802 to 816; it reads QNDRDDLSTGRKSDD. Residues 850 to 914 are a coiled coil; sequence ALIAKTMKRK…YKRKKLEKEL (65 aa). Positions 916-965 are disordered; the sequence is AELSARSTGRGHSQPPFIRTKSQMSEVTESSRQNTPRMRGQSSVEQRVSV. Polar residues predominate over residues 935-951; that stretch reads TKSQMSEVTESSRQNTP. The segment covering 956-965 has biased composition (low complexity); that stretch reads QSSVEQRVSV. Residues 972 to 1109 form the CKK domain; that stretch reads THKLYAKTVT…RIPHSGTPAH (138 aa).

This sequence belongs to the CAMSAP1 family. In terms of assembly, interacts with dapk-1. In terms of tissue distribution, expressed in larval and adult epidermis, intestine and pharynx. Broadly expressed in the nervous system. Expressed in body wall muscle cells.

The protein resides in the cell projection. The protein localises to the axon. Its subcellular location is the dendrite. It is found in the cell membrane. It localises to the sarcolemma. The protein resides in the cytoplasm. The protein localises to the cytosol. Its subcellular location is the cytoskeleton. It is found in the perikaryon. Required for microtubule stability and anchorage by binding to the minus ends of microtubules. Acts redundantly with noca-1 to control circumferential microtubule assembly along the body which is necessary for larval development, viability, morphology and integrity of the epidermis. Promotes microtubule stability and polymerization in neurons. Involved in the maintenance of neurite morphology in ALM and PLM neurons. May play a role in synaptic protein localization in the PLM neuron. May act upstream of dlk-1 in neuronal regeneration. Plays a role in postembryonic epidermal tissue integrity and wound healing. This Caenorhabditis elegans protein is Patronin (microtubule-binding protein) homolog.